A 205-amino-acid chain; its full sequence is UPF0316 protein Cthe_2213 (205 aa).

3 helical membrane passes run 15–37 (LPLL…IIFV), 44–64 (LAPV…SQIM), and 70–90 (FVCY…GIII).

Belongs to the UPF0316 family.

It localises to the cell membrane. The polypeptide is UPF0316 protein Cthe_2213 (Acetivibrio thermocellus (strain ATCC 27405 / DSM 1237 / JCM 9322 / NBRC 103400 / NCIMB 10682 / NRRL B-4536 / VPI 7372) (Clostridium thermocellum)).